Consider the following 514-residue polypeptide: Zinc finger and BTB domain-containing protein 2 (514 aa).

Residues 24-89 (CDCTVAIGDV…MYTGKMAPQL (66 aa)) form the BTB domain. Glycyl lysine isopeptide (Lys-Gly) (interchain with G-Cter in SUMO2) cross-links involve residues lysine 147 and lysine 154. Residues 149-231 (ASAPEKLGRD…LEASSSDEQP (83 aa)) form a disordered region. 2 stretches are compositionally biased toward polar residues: residues 161–200 (PQTS…PLQT) and 222–231 (LEASSSDEQP). A C2H2-type 1 zinc finger spans residues 254–276 (YACHLCGRRFTLRSSLREHLQIH). Serine 341 carries the phosphoserine modification. Lysine 362 participates in a covalent cross-link: Glycyl lysine isopeptide (Lys-Gly) (interchain with G-Cter in SUMO2). Residues 363–385 (YECTICGRKFIQKSHWREHMYIH) form a C2H2-type 2 zinc finger. A C2H2-type 3; atypical zinc finger spans residues 390-410 (FKCSTCDKSFCRANQAARHVC). A C2H2-type 4; atypical zinc finger spans residues 448–468 (YKCNLCDKTFSTPNEVVKHSC). Glycyl lysine isopeptide (Lys-Gly) (interchain with G-Cter in SUMO2) cross-links involve residues lysine 465, lysine 505, and lysine 506.

It is found in the nucleus. May be involved in transcriptional regulation. In Homo sapiens (Human), this protein is Zinc finger and BTB domain-containing protein 2 (ZBTB2).